The chain runs to 200 residues: Recombination protein RecR (200 aa).

A C4-type zinc finger spans residues 57-72 (CQECRTFTEQDVCHIC). The 96-residue stretch at 81–176 (GQLCVVESPA…TASRIAHGVP (96 aa)) folds into the Toprim domain.

It belongs to the RecR family.

Its function is as follows. May play a role in DNA repair. It seems to be involved in an RecBC-independent recombinational process of DNA repair. It may act with RecF and RecO. This chain is Recombination protein RecR, found in Vibrio cholerae serotype O1 (strain ATCC 39541 / Classical Ogawa 395 / O395).